The primary structure comprises 491 residues: Glutamyl-tRNA(Gln) amidotransferase subunit A (491 aa).

Residues K76 and S154 each act as charge relay system in the active site. S178 functions as the Acyl-ester intermediate in the catalytic mechanism.

Belongs to the amidase family. GatA subfamily. Heterotrimer of A, B and C subunits.

The catalysed reaction is L-glutamyl-tRNA(Gln) + L-glutamine + ATP + H2O = L-glutaminyl-tRNA(Gln) + L-glutamate + ADP + phosphate + H(+). Its function is as follows. Allows the formation of correctly charged Gln-tRNA(Gln) through the transamidation of misacylated Glu-tRNA(Gln) in organisms which lack glutaminyl-tRNA synthetase. The reaction takes place in the presence of glutamine and ATP through an activated gamma-phospho-Glu-tRNA(Gln). This Cereibacter sphaeroides (strain ATCC 17023 / DSM 158 / JCM 6121 / CCUG 31486 / LMG 2827 / NBRC 12203 / NCIMB 8253 / ATH 2.4.1.) (Rhodobacter sphaeroides) protein is Glutamyl-tRNA(Gln) amidotransferase subunit A.